The sequence spans 129 residues: Follitropin subunit beta (129 aa).

An N-terminal signal peptide occupies residues 1-18; the sequence is MKSVQFCFLFCCWKAICC. 6 cysteine pairs are disulfide-bonded: cysteine 21–cysteine 69, cysteine 35–cysteine 84, cysteine 38–cysteine 122, cysteine 46–cysteine 100, cysteine 50–cysteine 102, and cysteine 105–cysteine 112. N-linked (GlcNAc...) asparagine glycans are attached at residues asparagine 25 and asparagine 42.

This sequence belongs to the glycoprotein hormones subunit beta family. As to quaternary structure, heterodimer. The active follitropin is a heterodimer composed of an alpha chain/CGA shared with other hormones and a unique beta chain/FSHB shown here.

It is found in the secreted. In terms of biological role, together with the alpha chain CGA constitutes follitropin, the follicle-stimulating hormone, and provides its biological specificity to the hormone heterodimer. Binds FSHR, a G protein-coupled receptor, on target cells to activate downstream signaling pathways. Follitropin is involved in follicle development and spermatogenesis in reproductive organs. The polypeptide is Follitropin subunit beta (FSHB) (Oryctolagus cuniculus (Rabbit)).